A 326-amino-acid polypeptide reads, in one-letter code: MESEEVDNKFTWVIKNFSTLQYDKIYSDPFVIGGCKWHLLAYPKGNKFNNSLSLYLVVDDARALPCGWRRYAQFSLTIINQLTDKLSQRGEKQNWFNQRNLGSGFTSMIPLPNLHAKNAGYLVNGEVKIVVEINDLEVIGKLDVSEESEETNQPLKKIKLDDNDAVSFDSLNETSPVKESIDVNGFQVLPSQVESVKCIFERHPDFASKFRPKNRHLKSTYMTVLLGLIKTLCQLPEELTDDDLDEASVAVSYVENGGLRLDWLEKKLAEVKAKKKKVETGKARLQRAEEELQKLNQKCLELKAFLEKENADVSEANVPLSFEDVV.

The MATH domain occupies 7–133 (DNKFTWVIKN…NGEVKIVVEI (127 aa)). The stretch at 259 to 312 (LRLDWLEKKLAEVKAKKKKVETGKARLQRAEEELQKLNQKCLELKAFLEKENAD) forms a coiled coil.

This Arabidopsis thaliana (Mouse-ear cress) protein is MATH domain and coiled-coil domain-containing protein At3g58370.